The primary structure comprises 260 residues: MSHHWGYGKHNGPEHWHKDFPIANGERQSPIDIDTNAAKHDPSLKPLRVCYEHPISRRIINNGHSFNVEFDDSHDKTVLKEGPLEGTYRLIQFHFHWGSSDGQGSEHTVNKKKYAAELHLVHWNTKYGDFGKAVKHPDGLAVLGIFLKIGSATPGLQKVVDTLSSIKTKGKSVDFTDFDPRGLLPESLDYWTYPGSLTTPPLLECVTWIVLKEPITVSSEQMLKFRNLNFNKEAEPEEPMVDNWRPTQPLKGRQVKASFV.

The residue at position 2 (serine 2) is an N-acetylserine. Position 2 is a phosphoserine (serine 2). The 257-residue stretch at 3–259 (HHWGYGKHNG…LKGRQVKASF (257 aa)) folds into the Alpha-carbonic anhydrase domain. Histidine 64 functions as the Proton donor/acceptor in the catalytic mechanism. Zn(2+) contacts are provided by histidine 94, histidine 96, and histidine 119. Phosphoserine is present on residues serine 165 and serine 172. 198 to 199 (TT) is a substrate binding site.

It belongs to the alpha-carbonic anhydrase family. As to quaternary structure, interacts with SLC4A4 and SLC26A6. Interaction with SLC4A7 regulates SLC4A7 transporter activity. Zn(2+) serves as cofactor.

It is found in the cytoplasm. Its subcellular location is the cell membrane. The catalysed reaction is hydrogencarbonate + H(+) = CO2 + H2O. It carries out the reaction urea = cyanamide + H2O. Its activity is regulated as follows. Inhibited by acetazolamide. Its function is as follows. Catalyzes the reversible hydration of carbon dioxide. Can also hydrate cyanamide to urea. Involved in the regulation of fluid secretion into the anterior chamber of the eye. Essential for bone resorption and osteoclast differentiation. Contributes to intracellular pH regulation in the duodenal upper villous epithelium during proton-coupled peptide absorption. Stimulates the chloride-bicarbonate exchange activity of SLC26A6. The polypeptide is Carbonic anhydrase 2 (CA2) (Oryctolagus cuniculus (Rabbit)).